Consider the following 350-residue polypeptide: 3-dehydroquinate synthase (350 aa).

NAD(+) is bound by residues 63 to 68 (DGEEYK), 97 to 101 (GVIGD), 121 to 122 (TT), Lys-134, Lys-143, and 161 to 164 (FLKT). Residues Glu-176, His-235, and His-252 each contribute to the Zn(2+) site.

The protein belongs to the sugar phosphate cyclases superfamily. Dehydroquinate synthase family. Co(2+) serves as cofactor. Requires Zn(2+) as cofactor. The cofactor is NAD(+).

Its subcellular location is the cytoplasm. The catalysed reaction is 7-phospho-2-dehydro-3-deoxy-D-arabino-heptonate = 3-dehydroquinate + phosphate. Its pathway is metabolic intermediate biosynthesis; chorismate biosynthesis; chorismate from D-erythrose 4-phosphate and phosphoenolpyruvate: step 2/7. In terms of biological role, catalyzes the conversion of 3-deoxy-D-arabino-heptulosonate 7-phosphate (DAHP) to dehydroquinate (DHQ). The protein is 3-dehydroquinate synthase of Sulfurovum sp. (strain NBC37-1).